We begin with the raw amino-acid sequence, 160 residues long: MGVFNYESETTSVIPAARLFKAFILDGDNLIPKVAPQAISSVENIEGNGGPGTIKKITFPEGSPFKYVKERVDEVDHANFKYSYSMIEGGALGDTLEKICNEIKIVATPDGGSILKISNKYHTKGDHEMKAEHMKAIKEKGEALLRAVESYLLAHSDAYN.

4 residues coordinate brassinolide: lysine 55, tyrosine 82, tyrosine 84, and asparagine 101.

The protein belongs to the BetVI family.

It is found in the cytoplasm. In terms of biological role, may be a general steroid carrier protein. This is Major pollen allergen Bet v 1-M/N (BETV1M) from Betula pendula (European white birch).